A 477-amino-acid polypeptide reads, in one-letter code: Aspartyl/glutamyl-tRNA(Asn/Gln) amidotransferase subunit B (477 aa).

The protein belongs to the GatB/GatE family. GatB subfamily. Heterotrimer of A, B and C subunits.

It carries out the reaction L-glutamyl-tRNA(Gln) + L-glutamine + ATP + H2O = L-glutaminyl-tRNA(Gln) + L-glutamate + ADP + phosphate + H(+). It catalyses the reaction L-aspartyl-tRNA(Asn) + L-glutamine + ATP + H2O = L-asparaginyl-tRNA(Asn) + L-glutamate + ADP + phosphate + 2 H(+). In terms of biological role, allows the formation of correctly charged Asn-tRNA(Asn) or Gln-tRNA(Gln) through the transamidation of misacylated Asp-tRNA(Asn) or Glu-tRNA(Gln) in organisms which lack either or both of asparaginyl-tRNA or glutaminyl-tRNA synthetases. The reaction takes place in the presence of glutamine and ATP through an activated phospho-Asp-tRNA(Asn) or phospho-Glu-tRNA(Gln). In Lactococcus lactis subsp. cremoris (strain SK11), this protein is Aspartyl/glutamyl-tRNA(Asn/Gln) amidotransferase subunit B.